The chain runs to 70 residues: Large ribosomal subunit protein bL31 (70 aa).

Residues Cys-16, Cys-18, Cys-37, and Cys-40 each coordinate Zn(2+).

Belongs to the bacterial ribosomal protein bL31 family. Type A subfamily. Part of the 50S ribosomal subunit. Requires Zn(2+) as cofactor.

Binds the 23S rRNA. This chain is Large ribosomal subunit protein bL31, found in Histophilus somni (strain 2336) (Haemophilus somnus).